The sequence spans 463 residues: Glucagon-like peptide 1 receptor (463 aa).

A signal peptide spans 1-21; sequence MAVTPSLLRLALLLLGAVGRA. The Extracellular segment spans residues 22 to 139; the sequence is GPRPQGATVS…KQGERNSPEE (118 aa). Cystine bridges form between Cys46-Cys71, Cys62-Cys104, and Cys85-Cys126. N-linked (GlcNAc...) asparagine glycosylation is found at Asn63, Asn82, and Asn115. The helical transmembrane segment at 140 to 164 threads the bilayer; the sequence is QLLSLYIIYTVGYALSFSALVIASA. Residues 165–175 are Cytoplasmic-facing; sequence ILVSFRHLHCT. A helical transmembrane segment spans residues 176–201; the sequence is RNYIHLNLFASFILRALSVFIKDAAL. The Extracellular portion of the chain corresponds to 202–227; it reads KWMYSTAAQQHQWDGLLSYQDSLGCR. Residues Cys226 and Cys296 are joined by a disulfide bond. The helical transmembrane segment at 228-251 threads the bilayer; it reads LVFLLMQYCVAANYYWLLVEGVYL. The Cytoplasmic portion of the chain corresponds to 252-265; that stretch reads YTLLAFSVFSEQRI. A helical transmembrane segment spans residues 266-290; it reads FKLYLSIGWGVPLLFVIPWGIVKYL. At 291 to 305 the chain is on the extracellular side; the sequence is YEDEGCWTRNSNMNY. Residues 306 to 328 form a helical membrane-spanning segment; the sequence is WLIIRLPILFAIGVNFLVFIRVI. Residues 329-348 lie on the Cytoplasmic side of the membrane; the sequence is CIVIAKLKANLMCKTDIKCR. Residue Cys341 is modified to ADP-ribosylcysteine. Arg348 is modified (ADP-ribosylarginine). Residues 349–370 traverse the membrane as a helical segment; sequence LAKSTLTLIPLLGTHEVIFAFV. Residues 352-355 are important for allosteric inhibitor binding; it reads STLT. The Extracellular segment spans residues 371-383; that stretch reads MDEHARGTLRFVK. Residues 384-404 traverse the membrane as a helical segment; sequence LFTELSFTSFQGFMVAVLYCF. Over 405–463 the chain is Cytoplasmic; sequence VNNEVQMEFRKSWERWRLERLNIQRDSSMKPLKCPTSSVSSGATVGSSVYAATCQNSCS.

This sequence belongs to the G-protein coupled receptor 2 family. May form homodimers and heterodimers with GIPR. N-glycosylation enhances cell surface expression and lengthens receptor half-life by preventing degradation in the ER. Pancreatic islets, stomach, lung, rat insulinoma cell line.

Its subcellular location is the cell membrane. Its function is as follows. G-protein coupled receptor for glucagon-like peptide 1 (GLP-1). Ligand binding triggers activation of a signaling cascade that leads to the activation of adenylyl cyclase and increased intracellular cAMP levels. Plays a role in regulating insulin secretion in response to GLP-1. This Rattus norvegicus (Rat) protein is Glucagon-like peptide 1 receptor (Glp1r).